The sequence spans 159 residues: Putative RING-H2 finger protein ATL69 (159 aa).

A helical membrane pass occupies residues 13 to 33 (LGYGIAIAVSILVLISFIMLA). The RING-type; atypical zinc finger occupies 94 to 136 (CSICLCDYEAREPVRCIPECNHCFHTDCVDEWLRTSATCPLCR).

This sequence belongs to the RING-type zinc finger family. ATL subfamily.

It is found in the membrane. The catalysed reaction is S-ubiquitinyl-[E2 ubiquitin-conjugating enzyme]-L-cysteine + [acceptor protein]-L-lysine = [E2 ubiquitin-conjugating enzyme]-L-cysteine + N(6)-ubiquitinyl-[acceptor protein]-L-lysine.. It functions in the pathway protein modification; protein ubiquitination. This is Putative RING-H2 finger protein ATL69 (ATL69) from Arabidopsis thaliana (Mouse-ear cress).